Reading from the N-terminus, the 400-residue chain is uncharacterized protein (400 aa).

The first 23 residues, 1–23 (MSRKLLLALTFLVVLGIAVVVMA), serve as a signal peptide directing secretion.

This is an uncharacterized protein from Archaeoglobus fulgidus (strain ATCC 49558 / DSM 4304 / JCM 9628 / NBRC 100126 / VC-16).